The sequence spans 447 residues: N-succinylarginine dihydrolase (447 aa).

Residues 19–28, Asn110, and 137–138 contribute to the substrate site; these read AGLSFGNEAS and HR. Glu174 is an active-site residue. Arg214 provides a ligand contact to substrate. Residue His250 is part of the active site. The substrate site is built by Asp252 and Asn365. Cys371 functions as the Nucleophile in the catalytic mechanism.

Belongs to the succinylarginine dihydrolase family. Homodimer.

The enzyme catalyses N(2)-succinyl-L-arginine + 2 H2O + 2 H(+) = N(2)-succinyl-L-ornithine + 2 NH4(+) + CO2. The protein operates within amino-acid degradation; L-arginine degradation via AST pathway; L-glutamate and succinate from L-arginine: step 2/5. Its function is as follows. Catalyzes the hydrolysis of N(2)-succinylarginine into N(2)-succinylornithine, ammonia and CO(2). The sequence is that of N-succinylarginine dihydrolase from Acinetobacter baumannii (strain ATCC 17978 / DSM 105126 / CIP 53.77 / LMG 1025 / NCDC KC755 / 5377).